Consider the following 88-residue polypeptide: Small ribosomal subunit protein bS16c (88 aa).

Belongs to the bacterial ribosomal protein bS16 family.

The protein resides in the plastid. It localises to the chloroplast. In Calycanthus floridus var. glaucus (Eastern sweetshrub), this protein is Small ribosomal subunit protein bS16c.